Reading from the N-terminus, the 877-residue chain is Probable linoleate 9S-lipoxygenase 4 (877 aa).

The region spanning 38-165 is the PLAT domain; that stretch reads GDFHASLLDG…NYQYERVFFA (128 aa). The Lipoxygenase domain occupies 168–877; that stretch reads TYLPSKMPAP…AMGIPNSISI (710 aa). The tract at residues 229 to 252 is disordered; it reads GSQELPYPRRGRTGRAPTKTDPNT. Residues His-528, His-533, His-719, Asn-723, and Ile-877 each contribute to the Fe cation site.

It belongs to the lipoxygenase family. Requires Fe cation as cofactor.

The enzyme catalyses (9Z,12Z)-octadecadienoate + O2 = (9S)-hydroperoxy-(10E,12Z)-octadecadienoate. It functions in the pathway lipid metabolism; oxylipin biosynthesis. Plant lipoxygenase may be involved in a number of diverse aspects of plant physiology including growth and development, pest resistance, and senescence or responses to wounding. Catalyzes the hydroperoxidation of lipids containing a cis,cis-1,4-pentadiene structure. The chain is Probable linoleate 9S-lipoxygenase 4 from Oryza sativa subsp. japonica (Rice).